A 195-amino-acid chain; its full sequence is MELSEYVQKGFQMLADPGSFDSNTFTLLLRAAFQSLLDAQADEAVLDHPDLKHIDPVVLKHRHAAAATYILEAGKQRADRSTLSTYLEDCKFDSERIELFWTEYQNNRNSLEILLGSIGRSLPHITDVSWRLEYQIKTNQLDKMYRPAYLVTLNVENTDSRSHPEISFSCNMEQLQDLVGKLKDASKSLERATQL.

A COMM domain is found at 124–193 (HITDVSWRLE…DASKSLERAT (70 aa)).

This sequence belongs to the COMM domain-containing protein 3 family. As to quaternary structure, component of the commander complex consisting of the CCC subcomplex and the retriever subcomplex. Component of the CCC (COMMD/CCDC22/CCDC93) subcomplex consisting of COMMD1, COMMD2, COMMD3, COMMD4, COMMD5, COMMD6, COMMD7, COMMD8, COMMD9, COMMD10, CCDC22 and CCDC93; within the complex forms a heterodimer with COMMD2. Interacts with NFKB1/p105. Interacts with CCDC22, CCDC93, SCNN1B, CUL3, CUL4A, CUL4B, CUL5.

The protein localises to the cytoplasm. It is found in the nucleus. Scaffold protein in the commander complex that is essential for endosomal recycling of transmembrane cargos; the commander complex is composed of the CCC subcomplex and the retriever subcomplex. May modulate activity of cullin-RING E3 ubiquitin ligase (CRL) complexes. May down-regulate activation of NF-kappa-B. Modulates Na(+) transport in epithelial cells by regulation of apical cell surface expression of amiloride-sensitive sodium channel (ENaC) subunits. The sequence is that of COMM domain-containing protein 3 (COMMD3) from Bos taurus (Bovine).